Reading from the N-terminus, the 655-residue chain is Golgi integral membrane protein 4 (655 aa).

Glycine 2 carries the N-myristoyl glycine lipid modification. The Cytoplasmic portion of the chain corresponds to 2–12; it reads GNGMCSRKQKR. The chain crosses the membrane as a helical; Signal-anchor for type II membrane protein span at residues 13-33; it reads IFQTLLLLTVVFGFLYGAMLY. Residues 34–655 lie on the Lumenal side of the membrane; sequence LELQTQLRKA…AEKSHRRAEM (622 aa). Positions 38 to 107 are golgi targeting; it reads TQLRKAEAVA…ETLNKGRQDS (70 aa). Positions 66–216 form a coiled coil; it reads EHRSRLEKSL…KQLKDTLNRI (151 aa). The interval 80–175 is endosome targeting; the sequence is LEHKKAKEDF…QELSKLKETV (96 aa). Positions 122 to 145 are disordered; it reads KSQHEELRKQHSDLEEEHRKQGED. The span at 123–145 shows a compositional bias: basic and acidic residues; that stretch reads SQHEELRKQHSDLEEEHRKQGED. Positions 176 to 220 are golgi targeting; the sequence is YNLREENRQLRKAHQDIHTQLQDVKTQVAEYKQLKDTLNRIPSFR. Asparagine 229 carries N-linked (GlcNAc...) asparagine glycosylation. Disordered regions lie at residues 256-275 and 285-655; these read QPNHEAGPRRMEEKPLSSMQ and EQNQ…RAEM. Basic and acidic residues-rich tracts occupy residues 261 to 270, 290 to 307, 319 to 328, and 348 to 360; these read AGPRRMEEKP, EPREPEERQVEEEHRKAL, EHLEEEHDPS, and LDGHPQAEVEHST. Serine 328 is modified (phosphoserine). Over residues 361 to 370 the composition is skewed to polar residues; sequence KAATNFQSPY. The segment covering 381-398 has biased composition (basic and acidic residues); that stretch reads ARRDEEAQRLREHQEALH. 2 stretches are compositionally biased toward low complexity: residues 399 to 423 and 433 to 442; these read QQRLHGQLLRQQQQQQFLAREMAQQ and QQHQEQLRQQ. A compositionally biased stretch (basic and acidic residues) spans 468-508; the sequence is AYDRDNQRQDEAEGDPGNRQELREPGHQEGDPEVEADRAAV. Serine 540 carries the phosphoserine modification. Over residues 567–589 the composition is skewed to acidic residues; the sequence is QQEDNVDEQYQDEGEEEVQEDLT. Position 576 is a phosphotyrosine (tyrosine 576). Phosphothreonine is present on threonine 589. A compositionally biased stretch (basic and acidic residues) spans 590-620; that stretch reads EEKKREMEHNVEETYGEHPDDKNNDGEEQGV. At tyrosine 633 the chain carries Phosphotyrosine. A compositionally biased stretch (acidic residues) spans 633–642; the sequence is YEEEEDEEDG.

This sequence belongs to the GOLIM4 family. Phosphorylated by c-AMP-dependent kinases most probably in its lumenal part. Post-translationally, O-glycosylated; modified by sialic acid residues. In terms of processing, N-glycosylated; N-glycans are of the complex type and modified by sialic acid residues. In terms of tissue distribution, expressed by spermatozoa (at protein level).

The protein resides in the golgi apparatus. It localises to the golgi stack membrane. It is found in the endosome membrane. The protein localises to the membrane. Plays a role in endosome to Golgi protein trafficking; mediates protein transport along the late endosome-bypass pathway from the early endosome to the Golgi. The chain is Golgi integral membrane protein 4 (Golim4) from Mus musculus (Mouse).